The chain runs to 293 residues: Ribosomal protein L11 methyltransferase (293 aa).

4 residues coordinate S-adenosyl-L-methionine: Thr145, Gly166, Asp188, and Asn230.

The protein belongs to the methyltransferase superfamily. PrmA family.

It is found in the cytoplasm. The catalysed reaction is L-lysyl-[protein] + 3 S-adenosyl-L-methionine = N(6),N(6),N(6)-trimethyl-L-lysyl-[protein] + 3 S-adenosyl-L-homocysteine + 3 H(+). Functionally, methylates ribosomal protein L11. In Edwardsiella ictaluri (strain 93-146), this protein is Ribosomal protein L11 methyltransferase.